A 304-amino-acid chain; its full sequence is Coenzyme PQQ synthesis protein B (304 aa).

This sequence belongs to the PqqB family.

Its pathway is cofactor biosynthesis; pyrroloquinoline quinone biosynthesis. Its function is as follows. May be involved in the transport of PQQ or its precursor to the periplasm. This chain is Coenzyme PQQ synthesis protein B, found in Ectopseudomonas mendocina (strain ymp) (Pseudomonas mendocina).